We begin with the raw amino-acid sequence, 416 residues long: 2,3-bisphosphoglycerate-independent phosphoglycerate mutase (416 aa).

It belongs to the BPG-independent phosphoglycerate mutase family. A-PGAM subfamily.

The enzyme catalyses (2R)-2-phosphoglycerate = (2R)-3-phosphoglycerate. Its pathway is carbohydrate degradation; glycolysis; pyruvate from D-glyceraldehyde 3-phosphate: step 3/5. Catalyzes the interconversion of 2-phosphoglycerate and 3-phosphoglycerate. This Ignicoccus hospitalis (strain KIN4/I / DSM 18386 / JCM 14125) protein is 2,3-bisphosphoglycerate-independent phosphoglycerate mutase.